An 806-amino-acid polypeptide reads, in one-letter code: Plasminogen (806 aa).

The first 19 residues, 1–19, serve as a signal peptide directing secretion; sequence MEYGKVIFLFLLFLKSGQG. One can recognise a PAN domain in the interval 20-98; sequence ESLENYIKTE…RDVVLFEKRI (79 aa). 21 cysteine pairs are disulfide-bonded: C49–C73, C53–C61, C103–C181, C124–C164, C152–C176, C185–C262, C188–C316, C206–C245, C234–C257, C275–C352, C296–C335, C324–C347, C371–C448, C392–C431, C420–C443, C476–C555, C497–C538, C526–C550, C563–C681, C573–C581, and C603–C619. Kringle domains lie at 102–181, 184–262, 274–352, 370–448, and 475–555; these read DCKS…VPEC, ECMH…IPRC, QCLK…IPSC, ECYE…LEKC, and DCMY…IPQC. The 228-residue stretch at 577–804 folds into the Peptidase S1 domain; sequence IVGGCYAQPH…YISWIEDVMK (228 aa). The residue at position 593 (S593) is a Phosphoserine. Active-site charge relay system residues include H618 and D661. S684 is subject to Phosphoserine. Intrachain disulfides connect C695–C762, C725–C741, and C752–C780. S756 serves as the catalytic Charge relay system.

Belongs to the peptidase S1 family. Plasminogen subfamily. Interacts with CSPG4 and AMOT. Interacts (via the Kringle domains) with HRG; the interaction tethers PLG to the cell surface and enhances its activation. Interacts (via Kringle 4 domain) with ADA; the interaction stimulates PLG activation when in complex with DPP4. Angiostatin: Interacts with ATP5F1A; the interaction inhibits most of the angiogenic effects of angiostatin. In the presence of the inhibitor, the activation involves only cleavage after Arg-576, yielding two chains held together by two disulfide bonds. In the absence of the inhibitor, the activation involves additionally the removal of the activation peptide.

The protein localises to the secreted. It catalyses the reaction Preferential cleavage: Lys-|-Xaa &gt; Arg-|-Xaa, higher selectivity than trypsin. Converts fibrin into soluble products.. Converted into plasmin by plasminogen activators, both plasminogen and its activator being bound to fibrin. Activated with catalytic amounts of streptokinase. Functionally, plasmin dissolves the fibrin of blood clots and acts as a proteolytic factor in a variety of other processes including embryonic development, tissue remodeling, tumor invasion, and inflammation. In ovulation, weakens the walls of the Graafian follicle. It activates the urokinase-type plasminogen activator, collagenases and several complement zymogens, such as C1, C4 and C5. Cleavage of fibronectin and laminin leads to cell detachment and apoptosis. Also cleaves fibrin, thrombospondin and von Willebrand factor. Its role in tissue remodeling and tumor invasion may be modulated by CSPG4. Binds to cells. The chain is Plasminogen (PLG) from Notamacropus eugenii (Tammar wallaby).